A 98-amino-acid polypeptide reads, in one-letter code: Glutaredoxin 1 (98 aa).

In terms of domain architecture, Glutaredoxin spans 1 to 98 (MNKAILHAII…KLLEGQPKKD (98 aa)). An intrachain disulfide couples cysteine 17 to cysteine 20.

This sequence belongs to the glutaredoxin family. In terms of assembly, monomer.

It is found in the cytoplasm. In terms of biological role, has a glutathione-disulfide oxidoreductase activity in the presence of NADPH and glutathione reductase. Reduces low molecular weight disulfides and proteins. In Rickettsia bellii (strain RML369-C), this protein is Glutaredoxin 1 (grxC1).